The following is a 331-amino-acid chain: Protoheme IX farnesyltransferase (331 aa).

The next 9 membrane-spanning stretches (helical) occupy residues 22 to 42 (LVKP…MWMA), 50 to 70 (FGVT…INMV), 100 to 120 (FAGI…NLLA), 147 to 167 (IVIG…AATG), 174 to 194 (WVMF…LAIL), 220 to 240 (ILLY…PLHV), 241 to 261 (LGSF…WKAV), 273 to 293 (ATSL…AMGL), and 307 to 327 (LASL…LGAM).

Belongs to the UbiA prenyltransferase family. Protoheme IX farnesyltransferase subfamily.

It is found in the cell inner membrane. The catalysed reaction is heme b + (2E,6E)-farnesyl diphosphate + H2O = Fe(II)-heme o + diphosphate. It participates in porphyrin-containing compound metabolism; heme O biosynthesis; heme O from protoheme: step 1/1. Converts heme B (protoheme IX) to heme O by substitution of the vinyl group on carbon 2 of heme B porphyrin ring with a hydroxyethyl farnesyl side group. The chain is Protoheme IX farnesyltransferase from Synechococcus sp. (strain JA-3-3Ab) (Cyanobacteria bacterium Yellowstone A-Prime).